The following is a 180-amino-acid chain: NAD(P)H-quinone oxidoreductase subunit I, chloroplastic (180 aa).

4Fe-4S ferredoxin-type domains follow at residues 55-84 (GRIHFEFDKCIACEVCVRVCPIDLPLVDWK) and 95-124 (LNYSIDFGVCIFCGNCVEYCPTNCLSMTEE). Residues Cys64, Cys67, Cys70, Cys74, Cys104, Cys107, Cys110, and Cys114 each contribute to the [4Fe-4S] cluster site.

This sequence belongs to the complex I 23 kDa subunit family. As to quaternary structure, NDH is composed of at least 16 different subunits, 5 of which are encoded in the nucleus. The cofactor is [4Fe-4S] cluster.

The protein resides in the plastid. It is found in the chloroplast thylakoid membrane. The catalysed reaction is a plastoquinone + NADH + (n+1) H(+)(in) = a plastoquinol + NAD(+) + n H(+)(out). It catalyses the reaction a plastoquinone + NADPH + (n+1) H(+)(in) = a plastoquinol + NADP(+) + n H(+)(out). Its function is as follows. NDH shuttles electrons from NAD(P)H:plastoquinone, via FMN and iron-sulfur (Fe-S) centers, to quinones in the photosynthetic chain and possibly in a chloroplast respiratory chain. The immediate electron acceptor for the enzyme in this species is believed to be plastoquinone. Couples the redox reaction to proton translocation, and thus conserves the redox energy in a proton gradient. This chain is NAD(P)H-quinone oxidoreductase subunit I, chloroplastic, found in Sorghum bicolor (Sorghum).